The primary structure comprises 343 residues: Glycerol-3-phosphate dehydrogenase [NAD(P)+] (343 aa).

Residues serine 11, tryptophan 12, arginine 32, and lysine 106 each contribute to the NADPH site. Positions 106, 137, and 139 each coordinate sn-glycerol 3-phosphate. Alanine 141 provides a ligand contact to NADPH. 5 residues coordinate sn-glycerol 3-phosphate: lysine 192, aspartate 245, serine 255, arginine 256, and asparagine 257. The active-site Proton acceptor is lysine 192. NADPH is bound at residue arginine 256. Residues valine 280 and glutamate 282 each coordinate NADPH.

Belongs to the NAD-dependent glycerol-3-phosphate dehydrogenase family.

Its subcellular location is the cytoplasm. It catalyses the reaction sn-glycerol 3-phosphate + NAD(+) = dihydroxyacetone phosphate + NADH + H(+). The enzyme catalyses sn-glycerol 3-phosphate + NADP(+) = dihydroxyacetone phosphate + NADPH + H(+). Its pathway is membrane lipid metabolism; glycerophospholipid metabolism. Functionally, catalyzes the reduction of the glycolytic intermediate dihydroxyacetone phosphate (DHAP) to sn-glycerol 3-phosphate (G3P), the key precursor for phospholipid synthesis. The chain is Glycerol-3-phosphate dehydrogenase [NAD(P)+] from Syntrophomonas wolfei subsp. wolfei (strain DSM 2245B / Goettingen).